Consider the following 127-residue polypeptide: Protein FAM229A (127 aa).

The tract at residues 1 to 96 (MLPSSTPGPG…ATEHNPVRPL (96 aa)) is disordered. Residues 24–39 (RSPAARAPAAASSLGP) show a composition bias toward low complexity.

It belongs to the FAM229 family.

The chain is Protein FAM229A (FAM229A) from Homo sapiens (Human).